The primary structure comprises 567 residues: Interferon lambda receptor 1 (567 aa).

A signal peptide spans 1–22; sequence MSAWRIRVLATLCFLWQPRVHG. The Extracellular portion of the chain corresponds to 23 to 229; the sequence is QLPPPQNVTL…YEGEWKFPFS (207 aa). Positions 26-121 constitute a Fibronectin type-III domain; it reads PPQNVTLLSK…KSQFKEYHLD (96 aa). Asn29 carries N-linked (GlcNAc...) asparagine glycosylation. 3 cysteine pairs are disulfide-bonded: Cys74-Cys82, Cys86-Cys149, and Cys193-Cys215. Asn141 carries an N-linked (GlcNAc...) asparagine glycan. A helical membrane pass occupies residues 230–250; that stretch reads ATIPVFVLLILLTSASIIWLL. Over 251–567 the chain is Cytoplasmic; the sequence is KQDAKHKKMP…YQHSHYMRRS (317 aa).

This sequence belongs to the type II cytokine receptor family. As to quaternary structure, heterodimer with IL10RB.

It localises to the membrane. Its function is as follows. The IFNLR1/IL10RB dimer is a receptor for the cytokine ligands IFNL2 and IFNL3 and mediates their antiviral activity. The ligand/receptor complex stimulate the activation of the JAK/STAT signaling pathway leading to the expression of IFN-stimulated genes (ISG), which contribute to the antiviral state. Determines the cell type specificity of the lambda interferon action. Shows a more restricted pattern of expression in the epithelial tissues thereby limiting responses to lambda interferons primarily to epithelial cells of the respiratory, gastrointestinal, and reproductive tracts. The polypeptide is Interferon lambda receptor 1 (IFNLR1) (Gallus gallus (Chicken)).